Consider the following 930-residue polypeptide: F-box only protein 11 (930 aa).

Residues 1–150 (MNSVRAANRR…RVSGKSQDLS (150 aa)) form a disordered region. Residues 7-16 (ANRRPRRVSR) show a composition bias toward basic residues. Positions 17 to 27 (PRPVQQQQQQP) are enriched in low complexity. A compositionally biased stretch (pro residues) spans 28-73 (PQQPPPQPPQQQPPPQPPQQPPQQQPPPPPQQQPPPPPPPPPPPPQ). Residues 117-132 (PTKSSMEGASTSTTEN) show a composition bias toward polar residues. Residues 156-202 (QYLQEKLPDEVVLKIFSYLLEQDLCRAACVCKRFSELANDPILWKRL) enclose the F-box domain. PbH1 repeat units follow at residues 398 to 420 (GACP…YITD), 421 to 443 (HAQG…WVKN), 444 to 466 (HGNP…FTFD), 467 to 489 (HGMG…EVKA), 490 to 512 (YANP…YVHE), 513 to 535 (KGRG…WITS), 536 to 558 (NSDP…YIFG), 559 to 581 (DGRG…QIRT), 582 to 604 (NSCP…YVHE), 605 to 627 (KGQG…WVTT), 628 to 650 (GSTP…YFYD), 651 to 673 (NGHG…QIRT), 674 to 696 (GSNP…LVYN), 697 to 719 (SGLG…WIKT), 720 to 742 (DSNP…CIFN), 743 to 765 (GGRG…LIST), 766 to 788 (NSHP…EITN), 789 to 811 (HATA…FLAS), and 812 to 833 (GVNV…EKAV). The UBR-type zinc-finger motif lies at 836-907 (GQCLYKISSY…LSNPCTLAGE (72 aa)).

Component of the SCF(FBXO11) complex consisting of CUL1, RBX1, SKP1 and FBXO11. Interacts with CIITA. At 9.5 dpc and 10.5 dpc, expression is restricted to developing heart tissue. By 11.5 dpc and 12.5 dpc, detected in liver and subsequently in muscle by 13.5 dpc. At 14.5 dpc, still detected in heart, liver and muscle and also in the developing secondary palate including the nasal, medial and oral epithelia of the palatal shelves. At 15.5 dpc and 16.5 dpc, expressed in lung, kidney, heart, liver, muscle and adrenal gland. At this time, fusion of the palate shelves has occurred, with expression confined to the nasal and oral epithelia. At 17.5 dpc, expression in the lung is confined to bronchial epithelial cells and is evident in bone marrow, skin, tissue macrophages, osteoblasts, kidney, liver and spleen. At 18.5 dpc, expressed in bone marrow, liver, kidney and muscle but decreases in heart and lung. At this time, first detected in the middle ear epithelium. At the newborn stage, expression is strong in the middle ear where it is confined to mucin-secreting cells, as well as persisting in bone marrow, kidney and liver. Middle ear expression persists in postnatal head tissue at 4 and 13 days after birth and has declined by 21 days after birth. In the adult, expression is seen in alveolar macrophages of the lung, glomeruli and collecting tubules of the kidney, midbrain, heart and muscle.

It localises to the nucleus. The protein resides in the chromosome. Its pathway is protein modification; protein ubiquitination. Functionally, substrate recognition component of a SCF (SKP1-CUL1-F-box protein) E3 ubiquitin-protein ligase complex which mediates the ubiquitination and subsequent proteasomal degradation of target proteins, such as DTL/CDT2, BCL6, SNAI1 and PRDM1/BLIMP1. The SCF(FBXO11) complex mediates ubiquitination and degradation of BCL6, thereby playing a role in the germinal center B-cells terminal differentiation toward memory B-cells and plasma cells. The SCF(FBXO11) complex also mediates ubiquitination and degradation of DTL, an important step for the regulation of TGF-beta signaling, cell migration and the timing of the cell-cycle progression and exit. The SCF(FBXO11) complex also catalyzes ubiquitination and degradation of GSK3B-phosphorylated SNAI1. Binds to and neddylates phosphorylated p53/TP53, inhibiting its transcriptional activity. Plays a role in the regulatiom of erythropoiesis but not myelopoiesis or megakaryopoiesis. Mechanistically, activates erythroid genes by mediating the degradation of BAHD1, a heterochromatin-associated protein that recruits corepressors to H3K27me3 marks. Participates in macrophage cell death and inflammation in response to bacterial toxins by regulating the expression of complement 5a receptor 1/C5AR1 and IL-1beta. Acts as a critical regulator to determine the level of MHC-II by mediating the recognition of degron at the P/S/T domain of CIITA leading to its ubiquitination and subsequent degradation via the proteasome. Participates in the antiviral repsonse by initiating the activation of TBK1-IRF3-IFN-I axis. Mediates the 'Lys-63'-linked ubiquitination of TRAF3 to strengthen the interaction between TRAF3 and TBK1. The sequence is that of F-box only protein 11 from Mus musculus (Mouse).